A 178-amino-acid polypeptide reads, in one-letter code: Ribulose bisphosphate carboxylase small subunit, chloroplastic (178 aa).

Residues 1-54 (MALISSAAVTTINRAPVQANLATPFTGLKSSAGFPVTKKNNDITSITSNGSRVN) constitute a chloroplast transit peptide.

Belongs to the RuBisCO small chain family. In terms of assembly, heterohexadecamer of 8 large and 8 small subunits.

Its subcellular location is the plastid. It is found in the chloroplast. Functionally, ruBisCO catalyzes two reactions: the carboxylation of D-ribulose 1,5-bisphosphate, the primary event in carbon dioxide fixation, as well as the oxidative fragmentation of the pentose substrate. Both reactions occur simultaneously and in competition at the same active site. Although the small subunit is not catalytic it is essential for maximal activity. This is Ribulose bisphosphate carboxylase small subunit, chloroplastic from Trifolium repens (Creeping white clover).